Consider the following 287-residue polypeptide: Carbon monoxide dehydrogenase medium chain (287 aa).

The 177-residue stretch at 1–177 (MIPPRFEYHA…VEIRVPAFAQ (177 aa)) folds into the FAD-binding PCMH-type domain. FAD is bound by residues 32-36 (AGGHS) and 111-115 (TIGGD).

As to quaternary structure, dimer of heterotrimers. Each heterotrimer consists of a large, a medium and a small subunit. The cofactor is FAD.

The enzyme catalyses CO + a quinone + H2O = a quinol + CO2. In terms of biological role, catalyzes the oxidation of carbon monoxide to carbon dioxide. In Hydrogenophaga pseudoflava (Pseudomonas carboxydoflava), this protein is Carbon monoxide dehydrogenase medium chain (cutM).